Consider the following 506-residue polypeptide: Acyl-CoA-binding domain-containing protein 5 (506 aa).

An ACB domain is found at 44-133; the sequence is YETRFEAAVK…MKKIIETMPM (90 aa). An acyl-CoA is bound by residues 55–64, 75–79, Lys-101, and Tyr-120; these read IQSLPKNGSF and YSFYK. Residues 175 to 217 are disordered; it reads AKAVNGKAESSDSGAESEEEEAQEELKGAEQSGSDDKKMMTKS. A coiled-coil region spans residues 181 to 209; sequence KAESSDSGAESEEEEAQEELKGAEQSGSD. Residues Ser-184, Ser-185, Ser-187, Ser-191, Ser-206, and Ser-233 each carry the phosphoserine modification. Positions 198-217 are enriched in basic and acidic residues; sequence EELKGAEQSGSDDKKMMTKS. Disordered stretches follow at residues 234-302 and 345-417; these read FAQD…CDSM and AVKG…RGSR. A compositionally biased stretch (basic and acidic residues) spans 238–257; sequence SDIHTDSSRSARRSEDKKPT. The span at 258-267 shows a compositional bias: polar residues; it reads DQSSQQTGNT. At Ser-301 the chain carries Phosphoserine. Over residues 348–360 the composition is skewed to basic and acidic residues; that stretch reads GKGEVKHGGEDGR. Ser-403 is modified (phosphoserine). Residues 406–416 are compositionally biased toward basic and acidic residues; it reads DGERWGSDRGS. Positions 426 to 451 form a coiled coil; the sequence is LVLIRLQEDMQNVLQRLHKLETLTAS. Position 444 is an N6-acetyllysine (Lys-444). Residues 478–498 form a helical membrane-spanning segment; the sequence is GALAFAIIWPFIAQWLVHLYY.

The protein belongs to the ATG37 family.

The protein localises to the peroxisome membrane. Acyl-CoA binding protein which acts as the peroxisome receptor for pexophagy but is dispensable for aggrephagy and nonselective autophagy. Binds medium- and long-chain acyl-CoA esters. The protein is Acyl-CoA-binding domain-containing protein 5 (Acbd5) of Rattus norvegicus (Rat).